We begin with the raw amino-acid sequence, 872 residues long: Protein SEY1 (872 aa).

Topologically, residues 1 to 749 (MVANGHFAGV…KRSAIGGITQ (749 aa)) are cytoplasmic. The GB1/RHD3-type G domain maps to 49-294 (GFNYHLISVF…IEGGIFLPEY (246 aa)). 59–66 (GSQSTGKS) lines the GTP pocket. Positions 482-504 (SNYQQELSLYQKDLENIGGQLRR) form a coiled coil. Residues 676–704 (LDKWIGHTPSSATPADEEDLTPIGGVDED) form a disordered region. A compositionally biased stretch (acidic residues) spans 690 to 704 (ADEEDLTPIGGVDED). Residues 750-770 (VPLYFYGLLLALGWNEIVAVL) form a helical membrane-spanning segment. At 771–773 (RNP) the chain is on the lumenal side. Residues 774–794 (AYFLLLFVCAVTAYVTYQLNL) form a helical membrane-spanning segment. Topologically, residues 795-872 (WGPIIKMTEA…IDDADDDDDF (78 aa)) are cytoplasmic. Residues 849 to 872 (NRKSAGGFQNNRSHIDDADDDDDF) form a disordered region.

The protein belongs to the TRAFAC class dynamin-like GTPase superfamily. GB1/RHD3 GTPase family. RHD3 subfamily.

Its subcellular location is the endoplasmic reticulum membrane. Its function is as follows. Cooperates with the reticulon proteins and tubule-shaping DP1 family proteins to generate and maintain the structure of the tubular endoplasmic reticulum network. Has GTPase activity, which is required for its function in ER organization. This chain is Protein SEY1, found in Paracoccidioides brasiliensis (strain Pb03).